A 239-amino-acid chain; its full sequence is Cysteine-rich venom protein (239 aa).

A signal peptide spans 1–18 (MIVFILLSLAAVLQQSVA). One can recognise an SCP domain in the interval 37-165 (VDMHNSFRRS…PYNYFYVCQY (129 aa)). Cystine bridges form between C74–C152, C91–C166, C147–C163, C185–C192, C188–C197, C210–C228, and C219–C232. The 34-residue stretch at 201–234 (CPINNVFTNCDSLLQQSSCEDSYITTNCGASCFC) folds into the ShKT domain.

It belongs to the CRISP family. As to expression, expressed by the venom gland.

It localises to the secreted. Its function is as follows. Blocks contraction of smooth muscle elicited by high potassium-induced depolarization, but does not block caffeine-stimulated contraction. May target voltage-gated calcium channels on smooth muscle. This chain is Cysteine-rich venom protein, found in Cerberus rynchops (Dog-faced water snake).